The following is a 369-amino-acid chain: Leucine-specific-binding protein (369 aa).

Positions 1–23 (MKRKAKTIIAGIVALAVSQGAMA) are cleaved as a signal peptide. Cys-76 and Cys-101 are joined by a disulfide.

The protein belongs to the leucine-binding protein family.

The protein resides in the periplasm. Functionally, this protein is a component of the leucine-specific transport system, which is one of the two periplasmic binding protein-dependent transport systems of the high-affinity transport of the branched-chain amino acids. The protein is Leucine-specific-binding protein (livK) of Salmonella typhi.